We begin with the raw amino-acid sequence, 160 residues long: Large ribosomal subunit protein uL18 (160 aa).

Belongs to the universal ribosomal protein uL18 family. Part of the 50S ribosomal subunit. Contacts the 5S and 23S rRNAs.

Functionally, this is one of the proteins that bind and probably mediate the attachment of the 5S RNA into the large ribosomal subunit, where it forms part of the central protuberance. The protein is Large ribosomal subunit protein uL18 of Thermoplasma volcanium (strain ATCC 51530 / DSM 4299 / JCM 9571 / NBRC 15438 / GSS1).